Here is a 185-residue protein sequence, read N- to C-terminus: UPF0301 protein Tbd_2579 (185 aa).

It belongs to the UPF0301 (AlgH) family.

The sequence is that of UPF0301 protein Tbd_2579 from Thiobacillus denitrificans (strain ATCC 25259 / T1).